Consider the following 631-residue polypeptide: MSDERRLPSSAVGWLACGGLSLLANAWGILSVGAKQKKWKPLEFLLCTLAATHMLNVAVPIATYAVVQLRRQRPDYEWNEGLCKVFVSTFYTLTLATCFSVTSISYHRMWMVRWPVNYRLSNAKKQAVHTVMGIWMVSFILSALPAVGWHDTSERFYTHGCRFIVAEIGLGFGVCFLLLVGGSVAMGMVCTAIALFQTLATQVGHRADRRTFTVPTIVVEDAQGKRRSSIDGSEPARTSLQITGLVATIVVIYDCLMGFPVLVVSFSSLRADASAPWMALCVLWCSVTQALLLPLFLWTCDRYRADLKAVWEKCVALMANDEDSDNETSLEGSISPDMVLERSLDYSYGGDFVALDRMAKYELSALEGGLPQLYPLRPLQEDRMQYLQGAGRHRCGFPGGQPCFSPAGCSQVPPTRRFSHDDADVWAAVPLPTFLPRWSSGEDLAALAHLMLPAGSDRRRGSLLAFAEDAPPFRPRRRSAESLLSLQPSSLDGGPRHAQDSPPGSPRRRPGPGARSASVSLLPDAFALTAFEREPQALRRVPAPAQPFPAARDSAEPAEVPTPPGGRTQRSQGRRAARTHVGPLQSSLSASWGEPGGLHAAGCGSISSFLSSPSESSGYVTLHSDSLGSAS.

The Extracellular segment spans residues 1-11; the sequence is MSDERRLPSSA. A helical transmembrane segment spans residues 12–32; the sequence is VGWLACGGLSLLANAWGILSV. The Cytoplasmic portion of the chain corresponds to 33–41; sequence GAKQKKWKP. A helical transmembrane segment spans residues 42–62; the sequence is LEFLLCTLAATHMLNVAVPIA. The Extracellular portion of the chain corresponds to 63–84; sequence TYAVVQLRRQRPDYEWNEGLCK. The chain crosses the membrane as a helical span at residues 85-105; it reads VFVSTFYTLTLATCFSVTSIS. Over 106-126 the chain is Cytoplasmic; that stretch reads YHRMWMVRWPVNYRLSNAKKQ. Residues 127–147 traverse the membrane as a helical segment; it reads AVHTVMGIWMVSFILSALPAV. The Extracellular portion of the chain corresponds to 148–162; it reads GWHDTSERFYTHGCR. The helical transmembrane segment at 163–183 threads the bilayer; sequence FIVAEIGLGFGVCFLLLVGGS. The Cytoplasmic portion of the chain corresponds to 184–243; that stretch reads VAMGMVCTAIALFQTLATQVGHRADRRTFTVPTIVVEDAQGKRRSSIDGSEPARTSLQIT. A helical membrane pass occupies residues 244–264; sequence GLVATIVVIYDCLMGFPVLVV. Over 265–276 the chain is Extracellular; it reads SFSSLRADASAP. A helical transmembrane segment spans residues 277–297; the sequence is WMALCVLWCSVTQALLLPLFL. The Cytoplasmic segment spans residues 298–631; it reads WTCDRYRADL…LHSDSLGSAS (334 aa). Disordered regions lie at residues 486–518, 546–590, and 603–631; these read LQPS…RSAS, QPFP…SLSA, and CGSI…GSAS. Residues 605 to 617 are compositionally biased toward low complexity; the sequence is SISSFLSSPSESS.

Belongs to the G-protein coupled receptor 1 family.

It is found in the cell membrane. Orphan receptor. The chain is Probable G-protein coupled receptor 153 (Gpr153) from Mus musculus (Mouse).